An 88-amino-acid polypeptide reads, in one-letter code: Small ribosomal subunit protein bS18 (88 aa).

The disordered stretch occupies residues 1 to 26 (MAFAQSGGAGGGGGQRRPFFRRRKTC).

This sequence belongs to the bacterial ribosomal protein bS18 family. As to quaternary structure, part of the 30S ribosomal subunit. Forms a tight heterodimer with protein bS6.

Its function is as follows. Binds as a heterodimer with protein bS6 to the central domain of the 16S rRNA, where it helps stabilize the platform of the 30S subunit. This Xanthobacter autotrophicus (strain ATCC BAA-1158 / Py2) protein is Small ribosomal subunit protein bS18.